Consider the following 106-residue polypeptide: 3-phenylpropionate/cinnamic acid dioxygenase ferredoxin subunit (106 aa).

The Rieske domain maps to 4 to 99 (IYACPVADVP…VHVEGGDIFI (96 aa)). Residues C42, H44, C62, and H65 each coordinate [2Fe-2S] cluster.

Belongs to the bacterial ring-hydroxylating dioxygenase ferredoxin component family. As to quaternary structure, this dioxygenase system consists of four proteins: the two subunits of the hydroxylase component (HcaE and HcaF), a ferredoxin (HcaC) and a ferredoxin reductase (HcaD). [2Fe-2S] cluster serves as cofactor.

The protein operates within aromatic compound metabolism; 3-phenylpropanoate degradation. In terms of biological role, part of the multicomponent 3-phenylpropionate dioxygenase, that converts 3-phenylpropionic acid (PP) and cinnamic acid (CI) into 3-phenylpropionate-dihydrodiol (PP-dihydrodiol) and cinnamic acid-dihydrodiol (CI-dihydrodiol), respectively. This protein seems to be a 2Fe-2S ferredoxin. The sequence is that of 3-phenylpropionate/cinnamic acid dioxygenase ferredoxin subunit from Shigella flexneri serotype 5b (strain 8401).